The primary structure comprises 201 residues: Holliday junction resolvase RecU (201 aa).

Mg(2+) contacts are provided by threonine 85, aspartate 87, aspartate 100, and glutamine 119.

Belongs to the RecU family. It depends on Mg(2+) as a cofactor.

The protein resides in the cytoplasm. It catalyses the reaction Endonucleolytic cleavage at a junction such as a reciprocal single-stranded crossover between two homologous DNA duplexes (Holliday junction).. Its function is as follows. Endonuclease that resolves Holliday junction intermediates in genetic recombination. Cleaves mobile four-strand junctions by introducing symmetrical nicks in paired strands. Promotes annealing of linear ssDNA with homologous dsDNA. Required for DNA repair, homologous recombination and chromosome segregation. The sequence is that of Holliday junction resolvase RecU from Pediococcus pentosaceus (strain ATCC 25745 / CCUG 21536 / LMG 10740 / 183-1w).